The chain runs to 334 residues: Holliday junction branch migration complex subunit RuvB (334 aa).

Residues 4-184 form a large ATPase domain (RuvB-L) region; the sequence is ADRLIQPQLQ…FGIPLRLEFY (181 aa). Residues Arg-24, Gly-65, Lys-68, Thr-69, Thr-70, 131–133, Arg-174, Tyr-184, and Arg-221 contribute to the ATP site; that span reads EDY. Thr-69 lines the Mg(2+) pocket. The tract at residues 185-255 is small ATPAse domain (RuvB-S); it reads NVKDLSTIVT…VAEQALDLLD (71 aa). The interval 258-334 is head domain (RuvB-H); that stretch reads GEGFDYMDRK…YLHFGMIKPE (77 aa). DNA contacts are provided by Arg-294, Arg-313, and Arg-318.

This sequence belongs to the RuvB family. Homohexamer. Forms an RuvA(8)-RuvB(12)-Holliday junction (HJ) complex. HJ DNA is sandwiched between 2 RuvA tetramers; dsDNA enters through RuvA and exits via RuvB. An RuvB hexamer assembles on each DNA strand where it exits the tetramer. Each RuvB hexamer is contacted by two RuvA subunits (via domain III) on 2 adjacent RuvB subunits; this complex drives branch migration. In the full resolvosome a probable DNA-RuvA(4)-RuvB(12)-RuvC(2) complex forms which resolves the HJ.

Its subcellular location is the cytoplasm. It carries out the reaction ATP + H2O = ADP + phosphate + H(+). Its function is as follows. The RuvA-RuvB-RuvC complex processes Holliday junction (HJ) DNA during genetic recombination and DNA repair, while the RuvA-RuvB complex plays an important role in the rescue of blocked DNA replication forks via replication fork reversal (RFR). RuvA specifically binds to HJ cruciform DNA, conferring on it an open structure. The RuvB hexamer acts as an ATP-dependent pump, pulling dsDNA into and through the RuvAB complex. RuvB forms 2 homohexamers on either side of HJ DNA bound by 1 or 2 RuvA tetramers; 4 subunits per hexamer contact DNA at a time. Coordinated motions by a converter formed by DNA-disengaged RuvB subunits stimulates ATP hydrolysis and nucleotide exchange. Immobilization of the converter enables RuvB to convert the ATP-contained energy into a lever motion, pulling 2 nucleotides of DNA out of the RuvA tetramer per ATP hydrolyzed, thus driving DNA branch migration. The RuvB motors rotate together with the DNA substrate, which together with the progressing nucleotide cycle form the mechanistic basis for DNA recombination by continuous HJ branch migration. Branch migration allows RuvC to scan DNA until it finds its consensus sequence, where it cleaves and resolves cruciform DNA. The protein is Holliday junction branch migration complex subunit RuvB of Shewanella sp. (strain ANA-3).